The following is a 485-amino-acid chain: MYNVTYHQNSKAMATSDSIVDDRKQLHVATFPWLAFGHILPFLQLSKLIAEKGHKVSFLSTTRNIQRLSSHISPLINVVQLTLPRVQELPEDAEATTDVHPEDIQYLKKAVDGLQPEVTRFLEQHSPDWIIYDFTHYWLPSIAASLGISRAYFCVITPWTIAYLAPSSDAMINDSDGRTTVEDLTTPPKWFPFPTKVCWRKHDLARMEPYEAPGISDGYRMGMVFKGSDCLLFKCYHEFGTQWLPLLETLHQVPVVPVGLLPPEIPGDEKDETWVSIKKWLDGKQKGSVVYVALGSEALVSQTEVVELALGLELSGLPFVWAYRKPKGPAKSDSVELPDGFVERTRDRGLVWTSWAPQLRILSHESVCGFLTHCGSGSIVEGLMFGHPLIMLPIFCDQPLNARLLEDKQVGIEIPRNEEDGCLTKESVARSLRSVVVENEGEIYKANARALSKIYNDTKVEKEYVSQFVDYLEKNARAVAIDHES.

UDP-alpha-D-glucose is bound by residues S296, W355–A356, H373–E381, and F395–Q398.

This sequence belongs to the UDP-glycosyltransferase family.

In terms of biological role, may glycosylate diterpenes or flavonols in leaves. This Stevia rebaudiana (Stevia) protein is UDP-glycosyltransferase 91D1.